Here is an 801-residue protein sequence, read N- to C-terminus: Ferredoxin:CoB-CoM heterodisulfide reductase subunit A (801 aa).

149-172 (GGGIAGITAALNLADNGVSTVLVE) serves as a coordination point for FAD. 4Fe-4S ferredoxin-type domains lie at 239–269 (KKPR…FNCG) and 285–320 (PKIY…FSQK). [4Fe-4S] cluster-binding residues include Cys-248, Cys-251, Cys-254, Cys-258, Cys-295, Cys-303, Cys-306, and Cys-310. A disordered region spans residues 382–409 (FSKASSDPTPATCDSRCEDSSDESQGTD). 4Fe-4S ferredoxin-type domains lie at 606–634 (EIAT…VNES) and 635–664 (GRVV…IAGF). Residues Cys-615, Cys-618, Cys-621, Cys-624, Cys-644, Cys-647, Cys-650, and Cys-654 each coordinate [4Fe-4S] cluster.

Belongs to the HdrA family. The ferredoxin:CoB-CoM heterodisulfide reductase is composed of three subunits; HdrA1, HdrB1 and HdrC1. The cofactor is [4Fe-4S] cluster. Requires FAD as cofactor.

The protein localises to the cytoplasm. The catalysed reaction is coenzyme B + coenzyme M + 2 oxidized [2Fe-2S]-[ferredoxin] = coenzyme M-coenzyme B heterodisulfide + 2 reduced [2Fe-2S]-[ferredoxin] + 2 H(+). It participates in cofactor metabolism; coenzyme M-coenzyme B heterodisulfide reduction; coenzyme B and coenzyme M from coenzyme M-coenzyme B heterodisulfide: step 1/1. Its function is as follows. Part of a complex that catalyzes the reversible reduction of CoM-S-S-CoB to the thiol-coenzymes H-S-CoM (coenzyme M) and H-S-CoB (coenzyme B). Probably involved in methylotrophic methanogenesis but not in aceticlastic methanogenesis. This is Ferredoxin:CoB-CoM heterodisulfide reductase subunit A from Methanosarcina acetivorans (strain ATCC 35395 / DSM 2834 / JCM 12185 / C2A).